The following is an 855-amino-acid chain: Transcription factor gaf1 (855 aa).

The span at lysine 72–asparagine 112 shows a compositional bias: polar residues. 6 disordered regions span residues lysine 72–serine 126, threonine 149–proline 184, serine 229–serine 287, proline 412–serine 483, asparagine 602–threonine 643, and lysine 680–methionine 768. A compositionally biased stretch (basic and acidic residues) spans threonine 149 to phenylalanine 168. Serine 150 carries the post-translational modification Phosphoserine. Composition is skewed to low complexity over residues proline 240–asparagine 250 and asparagine 428–glutamine 444. A compositionally biased stretch (polar residues) spans glutamate 445 to leucine 476. Basic and acidic residues predominate over residues alanine 614 to threonine 623. Low complexity-rich tracts occupy residues arginine 625–threonine 643 and serine 707–alanine 717. A GATA-type zinc finger spans residues cysteine 635 to cysteine 659. 2 positions are modified to phosphoserine: serine 727 and serine 729. Low complexity predominate over residues glutamine 755–serine 767.

The protein resides in the nucleus. Transcriptional activator. The chain is Transcription factor gaf1 (gaf1) from Schizosaccharomyces pombe (strain 972 / ATCC 24843) (Fission yeast).